Here is a 276-residue protein sequence, read N- to C-terminus: O-methyltransferase cnsE (276 aa).

S-adenosyl-L-methionine is bound by residues Gln110, 133-134 (DA), and His155.

It belongs to the methyltransferase superfamily. S-adenosyl-L-methionine serves as cofactor.

It functions in the pathway alkaloid biosynthesis. Its function is as follows. O-methyltransferase; part of the gene cluster that mediates the biosynthesis of communesins, a prominent class of indole alkaloids with great potential as pharmaceuticals. Communesins are biosynthesized by the coupling of tryptamine and aurantioclavine, two building blocks derived from L-tryptophan. The L-tryptophan decarboxylase cnsB converts L-tryptophan to tryptamine, whereas the tryptophan dimethylallyltransferase cnsF converts L-tryptophan to 4-dimethylallyl tryptophan which is further transformed to aurantioclavine by the aurantioclavine synthase cnsA, probably aided by the catalase cnsD. The cytochrome P450 monooxygenase cnsC catalyzes the heterodimeric coupling between the two different indole moieties, tryptamine and aurantioclavine, to construct vicinal quaternary stereocenters and yield the heptacyclic communesin scaffold. The O-methyltransferase cnsE then methylates the communesin scaffold to produce communesin K, the simplest characterized communesin that contains the heptacyclic core. The dioxygenase cnsJ converts communesin K into communesin I. Acylation to introduce the hexadienyl group at position N16 of communesin I by the acyltransferase cnsK leads to the production of communesin B. The hexadienyl group is produced by the highly reducing polyketide synthase cnsI, before being hydrolytically removed from cnsI by the serine hydrolase cnsH, converted into hexadienyl-CoA by the CoA ligase cnsG, and then transferred to communesin I by cnsK. Surprisingly, cnsK may also be a promiscuous acyltransferase that can tolerate a range of acyl groups, including acetyl-, propionyl-, and butyryl-CoA, which lead to communesins A, G and H respectively. The roles of the alpha-ketoglutarate-dependent dioxygenases cnsM and cnsP have still to be determined. This is O-methyltransferase cnsE from Penicillium expansum (Blue mold rot fungus).